Here is a 541-residue protein sequence, read N- to C-terminus: Tyrosine-protein phosphatase non-receptor type 5 (541 aa).

The segment at 1-55 (MCCSERLLGLPQPVEMEAPDEAEGLPSKQKEMPPPPPPSPPSEPAQKLPPQGAGS) is disordered. The span at 32 to 43 (MPPPPPPSPPSE) shows a compositional bias: pro residues. Helical transmembrane passes span 64–84 (LCLF…LSGH) and 122–142 (LLLV…WHLL). Serine 221 is subject to Phosphoserine; by PKA. Position 231 is a phosphothreonine; by MAPK (threonine 231). Serine 244 is subject to Phosphoserine; by MAPK. In terms of domain architecture, Tyrosine-protein phosphatase spans 276 to 531 (LQAEFFEIPM…QFVHHAMSLY (256 aa)). Residues aspartate 437, 472 to 478 (CSAGIGR), and glutamine 516 contribute to the substrate site. Cysteine 472 acts as the Phosphocysteine intermediate in catalysis.

It belongs to the protein-tyrosine phosphatase family. Non-receptor class subfamily. In terms of processing, phosphorylation at Ser-221 by PKA deactivates PTPN5. Phosphorylation at Thr-231 and Ser-244 by MAPKs stabilizes the phosphatase, dephosphorylation of these sites results in ubiquitin-mediated degradation of the active phosphatase. As to expression, STEP20 is expressed only in the CNS.

Its subcellular location is the endoplasmic reticulum membrane. The protein resides in the cytoplasm. It carries out the reaction O-phospho-L-tyrosyl-[protein] + H2O = L-tyrosyl-[protein] + phosphate. In terms of biological role, may regulate the activity of several effector molecules involved in synaptic plasticity and neuronal cell survival, including MAPKs, Src family kinases and NMDA receptors. The chain is Tyrosine-protein phosphatase non-receptor type 5 (Ptpn5) from Mus musculus (Mouse).